We begin with the raw amino-acid sequence, 226 residues long: 3-isopropylmalate dehydratase small subunit (226 aa).

The disordered stretch occupies residues 204-226; the sequence is EAETVESAREPEAVEWAGPLADR.

This sequence belongs to the LeuD family. LeuD type 1 subfamily. As to quaternary structure, heterodimer of LeuC and LeuD.

The catalysed reaction is (2R,3S)-3-isopropylmalate = (2S)-2-isopropylmalate. It functions in the pathway amino-acid biosynthesis; L-leucine biosynthesis; L-leucine from 3-methyl-2-oxobutanoate: step 2/4. Its function is as follows. Catalyzes the isomerization between 2-isopropylmalate and 3-isopropylmalate, via the formation of 2-isopropylmaleate. This is 3-isopropylmalate dehydratase small subunit from Bifidobacterium animalis subsp. lactis (strain AD011).